We begin with the raw amino-acid sequence, 31 residues long: Cytochrome b6-f complex subunit 6 (31 aa).

Residues 4 to 24 (ITSYFGFLLAALTITSALLIG) traverse the membrane as a helical segment.

This sequence belongs to the PetL family. As to quaternary structure, the 4 large subunits of the cytochrome b6-f complex are cytochrome b6, subunit IV (17 kDa polypeptide, PetD), cytochrome f and the Rieske protein, while the 4 small subunits are PetG, PetL, PetM and PetN. The complex functions as a dimer.

Its subcellular location is the plastid. The protein resides in the chloroplast thylakoid membrane. Functionally, component of the cytochrome b6-f complex, which mediates electron transfer between photosystem II (PSII) and photosystem I (PSI), cyclic electron flow around PSI, and state transitions. PetL is important for photoautotrophic growth as well as for electron transfer efficiency and stability of the cytochrome b6-f complex. The sequence is that of Cytochrome b6-f complex subunit 6 from Piper cenocladum (Ant piper).